The primary structure comprises 535 residues: Secreted lipase 5 (535 aa).

Residues 1–17 (MHLKSLLLAALPLLLEA) form the signal peptide. N-linked (GlcNAc...) asparagine glycosylation is found at Asn32 and Asn119. Ser241 acts as the Acyl-ester intermediate in catalysis. N-linked (GlcNAc...) asparagine glycosylation is found at Asn282, Asn341, Asn347, and Asn432.

Belongs to the type-B carboxylesterase/lipase family.

The protein localises to the secreted. The catalysed reaction is a carboxylic ester + H2O = an alcohol + a carboxylate + H(+). Secreted lipase involved in plant virulence. Has a substrate preference for p-nitrophenyl esters with a carbon chain length of C8 (p-nitrophenyl caprylate). This is Secreted lipase 5 from Gibberella zeae (strain ATCC MYA-4620 / CBS 123657 / FGSC 9075 / NRRL 31084 / PH-1) (Wheat head blight fungus).